The following is a 160-amino-acid chain: Cytochrome b6-f complex subunit 4 (160 aa).

3 consecutive transmembrane segments (helical) span residues 36–56 (LLYV…GLAV), 95–115 (LLGI…PFIE), and 131–151 (TFFM…IFPI).

It belongs to the cytochrome b family. PetD subfamily. In terms of assembly, the 4 large subunits of the cytochrome b6-f complex are cytochrome b6, subunit IV (17 kDa polypeptide, PetD), cytochrome f and the Rieske protein, while the 4 small subunits are PetG, PetL, PetM and PetN. The complex functions as a dimer.

The protein resides in the cellular thylakoid membrane. Its function is as follows. Component of the cytochrome b6-f complex, which mediates electron transfer between photosystem II (PSII) and photosystem I (PSI), cyclic electron flow around PSI, and state transitions. The protein is Cytochrome b6-f complex subunit 4 of Gloeothece citriformis (strain PCC 7424) (Cyanothece sp. (strain PCC 7424)).